Consider the following 451-residue polypeptide: Acetylornithine aminotransferase, mitochondrial (451 aa).

The residue at position 302 (Lys302) is an N6-(pyridoxal phosphate)lysine.

Belongs to the class-III pyridoxal-phosphate-dependent aminotransferase family. Pyridoxal 5'-phosphate is required as a cofactor. As to expression, found at highest levels in nodules, confined to the infected cells.

The protein localises to the mitochondrion. The catalysed reaction is N(2)-acetyl-L-ornithine + 2-oxoglutarate = N-acetyl-L-glutamate 5-semialdehyde + L-glutamate. The protein operates within amino-acid biosynthesis; L-arginine biosynthesis; N(2)-acetyl-L-ornithine from L-glutamate: step 4/4. Involved in the biosynthesis of citrulline. In Alnus glutinosa (European alder), this protein is Acetylornithine aminotransferase, mitochondrial (AG118).